Here is a 593-residue protein sequence, read N- to C-terminus: Aspartate--tRNA(Asp/Asn) ligase (593 aa).

Residue glutamate 173 participates in L-aspartate binding. The aspartate stretch occupies residues 197-200 (QLFK). Residue arginine 219 coordinates L-aspartate. ATP-binding positions include 219–221 (RDE) and glutamine 228. Histidine 451 serves as a coordination point for L-aspartate. Glutamate 485 provides a ligand contact to ATP. Position 492 (arginine 492) interacts with L-aspartate. Residue 537–540 (GIDR) coordinates ATP.

The protein belongs to the class-II aminoacyl-tRNA synthetase family. Type 1 subfamily. In terms of assembly, homodimer.

It localises to the cytoplasm. It catalyses the reaction tRNA(Asx) + L-aspartate + ATP = L-aspartyl-tRNA(Asx) + AMP + diphosphate. Aspartyl-tRNA synthetase with relaxed tRNA specificity since it is able to aspartylate not only its cognate tRNA(Asp) but also tRNA(Asn). Reaction proceeds in two steps: L-aspartate is first activated by ATP to form Asp-AMP and then transferred to the acceptor end of tRNA(Asp/Asn). The polypeptide is Aspartate--tRNA(Asp/Asn) ligase (Legionella pneumophila (strain Corby)).